A 424-amino-acid chain; its full sequence is Serine--tRNA ligase (424 aa).

An L-serine-binding site is contributed by 230 to 232 (TAE). 261-263 (RSE) is a binding site for ATP. L-serine is bound at residue glutamate 284. 348–351 (EISS) is an ATP binding site. An L-serine-binding site is contributed by serine 384.

This sequence belongs to the class-II aminoacyl-tRNA synthetase family. Type-1 seryl-tRNA synthetase subfamily. As to quaternary structure, homodimer. The tRNA molecule binds across the dimer.

The protein localises to the cytoplasm. The enzyme catalyses tRNA(Ser) + L-serine + ATP = L-seryl-tRNA(Ser) + AMP + diphosphate + H(+). The catalysed reaction is tRNA(Sec) + L-serine + ATP = L-seryl-tRNA(Sec) + AMP + diphosphate + H(+). It functions in the pathway aminoacyl-tRNA biosynthesis; selenocysteinyl-tRNA(Sec) biosynthesis; L-seryl-tRNA(Sec) from L-serine and tRNA(Sec): step 1/1. Catalyzes the attachment of serine to tRNA(Ser). Is also able to aminoacylate tRNA(Sec) with serine, to form the misacylated tRNA L-seryl-tRNA(Sec), which will be further converted into selenocysteinyl-tRNA(Sec). In Streptococcus pneumoniae (strain Hungary19A-6), this protein is Serine--tRNA ligase.